The chain runs to 271 residues: Glutamate racemase 3 (271 aa).

Substrate contacts are provided by residues Asp15–Ser16 and Tyr47–Gly48. Cys78 functions as the Proton donor/acceptor in the catalytic mechanism. Residue Asn79 to Thr80 participates in substrate binding. Cys185 acts as the Proton donor/acceptor in catalysis. Substrate is bound at residue Thr186 to His187.

This sequence belongs to the aspartate/glutamate racemases family.

The enzyme catalyses L-glutamate = D-glutamate. The protein operates within cell wall biogenesis; peptidoglycan biosynthesis. In terms of biological role, provides the (R)-glutamate required for cell wall biosynthesis. This chain is Glutamate racemase 3, found in Caldanaerobacter subterraneus subsp. tengcongensis (strain DSM 15242 / JCM 11007 / NBRC 100824 / MB4) (Thermoanaerobacter tengcongensis).